The primary structure comprises 35 residues: Z-limacoditoxin(1)-Dv4 (35 aa).

An N-terminal signal peptide occupies residues 1–22 (MKKTFLPIFLVILLASYALGNP). Position 23 is a pyrrolidone carboxylic acid (Gln-23). Pro-32 carries the post-translational modification Proline amide.

The protein belongs to the limacoditoxin-1 (ACP-like) family. As to expression, expressed by the venom secretory cell of the spine. The spine is a cuticular structure containing a single large nucleated venom-secreting cell at its base. It is an independent unit capable of producing, storing and injecting venom. On the back of D.vulnerans caterpillars, spines are grouped together by 50 to 100 to form scoli, of which there are eight in D.vulnerans.

Its subcellular location is the secreted. Its function is as follows. Potently activates insect GPCR. More precisely, it activates the ACP receptor (ACPR) from the mosquito A.aegypti (EC(50)=3.07 nM) with a potency comparable to that of the endogenous ligand. Has no activity on receptors of the closely related neuropeptides adipokinetic hormone and corazonin. In vivo, does not reveal any observable effects when injected into crickets (A.domesticus). Does not induce increase in intracellular calcium in mouse DRG neurons, suggesting that it does not induce pain. The polypeptide is Z-limacoditoxin(1)-Dv4 (Doratifera vulnerans (Mottled cup moth)).